Consider the following 202-residue polypeptide: ATP-dependent Clp protease proteolytic subunit (202 aa).

S106 functions as the Nucleophile in the catalytic mechanism. H131 is a catalytic residue.

It belongs to the peptidase S14 family. As to quaternary structure, fourteen ClpP subunits assemble into 2 heptameric rings which stack back to back to give a disk-like structure with a central cavity, resembling the structure of eukaryotic proteasomes.

It is found in the cytoplasm. It carries out the reaction Hydrolysis of proteins to small peptides in the presence of ATP and magnesium. alpha-casein is the usual test substrate. In the absence of ATP, only oligopeptides shorter than five residues are hydrolyzed (such as succinyl-Leu-Tyr-|-NHMec, and Leu-Tyr-Leu-|-Tyr-Trp, in which cleavage of the -Tyr-|-Leu- and -Tyr-|-Trp bonds also occurs).. In terms of biological role, cleaves peptides in various proteins in a process that requires ATP hydrolysis. Has a chymotrypsin-like activity. Plays a major role in the degradation of misfolded proteins. In Acidovorax ebreus (strain TPSY) (Diaphorobacter sp. (strain TPSY)), this protein is ATP-dependent Clp protease proteolytic subunit.